Consider the following 1073-residue polypeptide: Carbamoyl phosphate synthase large chain (1073 aa).

The interval 1-403 (MPKRTDIKSI…SLQKALRGLE (403 aa)) is carboxyphosphate synthetic domain. ATP contacts are provided by Arg129, Arg169, Gly175, Gly176, Glu208, Leu210, Glu215, Gly241, Val242, His243, Gln285, and Glu299. The 196-residue stretch at 133-328 (DKAMKDIGLE…IAKIAAKLAI (196 aa)) folds into the ATP-grasp 1 domain. Residues Gln285, Glu299, and Asn301 each contribute to the Mg(2+) site. Mn(2+) contacts are provided by Gln285, Glu299, and Asn301. An oligomerization domain region spans residues 404–553 (VGACGLDPKV…YSTYEEECEA (150 aa)). The interval 554 to 935 (NPSTRDKIMI…AFAKAQMGAS (382 aa)) is carbamoyl phosphate synthetic domain. Residues 678-869 (QQMVQRLSLL…LAMIAARVMA (192 aa)) form the ATP-grasp 2 domain. ATP-binding residues include Arg714, His753, Leu755, Glu760, Gly785, Val786, His787, Ser788, Gln828, and Glu840. The Mg(2+) site is built by Gln828, Glu840, and Asn842. Mn(2+) contacts are provided by Gln828, Glu840, and Asn842. Residues 936-1073 (EVLPTGGTAF…LQDLHAGLKA (138 aa)) enclose the MGS-like domain. Residues 936 to 1073 (EVLPTGGTAF…LQDLHAGLKA (138 aa)) are allosteric domain.

The protein belongs to the CarB family. Composed of two chains; the small (or glutamine) chain promotes the hydrolysis of glutamine to ammonia, which is used by the large (or ammonia) chain to synthesize carbamoyl phosphate. Tetramer of heterodimers (alpha,beta)4. Mg(2+) is required as a cofactor. It depends on Mn(2+) as a cofactor.

The catalysed reaction is hydrogencarbonate + L-glutamine + 2 ATP + H2O = carbamoyl phosphate + L-glutamate + 2 ADP + phosphate + 2 H(+). The enzyme catalyses hydrogencarbonate + NH4(+) + 2 ATP = carbamoyl phosphate + 2 ADP + phosphate + 2 H(+). The protein operates within amino-acid biosynthesis; L-arginine biosynthesis; carbamoyl phosphate from bicarbonate: step 1/1. It functions in the pathway pyrimidine metabolism; UMP biosynthesis via de novo pathway; (S)-dihydroorotate from bicarbonate: step 1/3. Large subunit of the glutamine-dependent carbamoyl phosphate synthetase (CPSase). CPSase catalyzes the formation of carbamoyl phosphate from the ammonia moiety of glutamine, carbonate, and phosphate donated by ATP, constituting the first step of 2 biosynthetic pathways, one leading to arginine and/or urea and the other to pyrimidine nucleotides. The large subunit (synthetase) binds the substrates ammonia (free or transferred from glutamine from the small subunit), hydrogencarbonate and ATP and carries out an ATP-coupled ligase reaction, activating hydrogencarbonate by forming carboxy phosphate which reacts with ammonia to form carbamoyl phosphate. The protein is Carbamoyl phosphate synthase large chain of Pseudomonas putida (strain ATCC 47054 / DSM 6125 / CFBP 8728 / NCIMB 11950 / KT2440).